The following is a 249-amino-acid chain: 5'-nucleotidase SurE (249 aa).

A divalent metal cation-binding residues include Asp-8, Asp-9, Ser-39, and Asn-91.

This sequence belongs to the SurE nucleotidase family. A divalent metal cation is required as a cofactor.

The protein resides in the cytoplasm. The enzyme catalyses a ribonucleoside 5'-phosphate + H2O = a ribonucleoside + phosphate. In terms of biological role, nucleotidase that shows phosphatase activity on nucleoside 5'-monophosphates. The protein is 5'-nucleotidase SurE of Pseudomonas aeruginosa (strain LESB58).